The primary structure comprises 240 residues: Probable transcriptional regulatory protein MS53_0373 (240 aa).

Belongs to the TACO1 family.

It localises to the cytoplasm. The polypeptide is Probable transcriptional regulatory protein MS53_0373 (Mycoplasmopsis synoviae (strain 53) (Mycoplasma synoviae)).